The chain runs to 169 residues: Pyrophosphate-energized proton pump 1 (169 aa).

Transmembrane regions (helical) follow at residues 45–65 (YVVA…GIAM), 114–134 (VIPS…VLLI), and 141–161 (AFAA…LVAI).

This sequence belongs to the H(+)-translocating pyrophosphatase (TC 3.A.10) family. Homodimer. Requires Mg(2+) as cofactor.

The protein resides in the cell inner membrane. The catalysed reaction is diphosphate + H2O + H(+)(in) = 2 phosphate + 2 H(+)(out). Functionally, proton pump that utilizes the energy of pyrophosphate hydrolysis as the driving force for proton movement across the membrane. Generates a proton motive force. This is Pyrophosphate-energized proton pump 1 (hppA1) from Rhizobium leguminosarum bv. trifolii.